The following is a 549-amino-acid chain: Glucose-6-phosphate isomerase (549 aa).

The Proton donor role is filled by E353. Residues H384 and K513 contribute to the active site.

The protein belongs to the GPI family.

Its subcellular location is the cytoplasm. It carries out the reaction alpha-D-glucose 6-phosphate = beta-D-fructose 6-phosphate. The protein operates within carbohydrate biosynthesis; gluconeogenesis. It participates in carbohydrate degradation; glycolysis; D-glyceraldehyde 3-phosphate and glycerone phosphate from D-glucose: step 2/4. Its function is as follows. Catalyzes the reversible isomerization of glucose-6-phosphate to fructose-6-phosphate. This chain is Glucose-6-phosphate isomerase, found in Brucella suis (strain ATCC 23445 / NCTC 10510).